Reading from the N-terminus, the 947-residue chain is Bifunctional glutamine synthetase adenylyltransferase/adenylyl-removing enzyme (947 aa).

Residues 1–440 (MTPLSSPLSQ…VFNELIGDDE (440 aa)) form an adenylyl removase region. Residues 450-947 (SEPWREVWQD…ASWRKWLVAV (498 aa)) are adenylyl transferase.

This sequence belongs to the GlnE family. Mg(2+) is required as a cofactor.

The catalysed reaction is [glutamine synthetase]-O(4)-(5'-adenylyl)-L-tyrosine + phosphate = [glutamine synthetase]-L-tyrosine + ADP. The enzyme catalyses [glutamine synthetase]-L-tyrosine + ATP = [glutamine synthetase]-O(4)-(5'-adenylyl)-L-tyrosine + diphosphate. Involved in the regulation of glutamine synthetase GlnA, a key enzyme in the process to assimilate ammonia. When cellular nitrogen levels are high, the C-terminal adenylyl transferase (AT) inactivates GlnA by covalent transfer of an adenylyl group from ATP to specific tyrosine residue of GlnA, thus reducing its activity. Conversely, when nitrogen levels are low, the N-terminal adenylyl removase (AR) activates GlnA by removing the adenylyl group by phosphorolysis, increasing its activity. The regulatory region of GlnE binds the signal transduction protein PII (GlnB) which indicates the nitrogen status of the cell. The sequence is that of Bifunctional glutamine synthetase adenylyltransferase/adenylyl-removing enzyme from Salmonella paratyphi A (strain ATCC 9150 / SARB42).